A 31-amino-acid polypeptide reads, in one-letter code: Cytochrome b6-f complex subunit 6 (31 aa).

Residues 3–23 (AIVAYIGFLALFTGIAAGLLF) traverse the membrane as a helical segment.

The protein belongs to the PetL family. In terms of assembly, the 4 large subunits of the cytochrome b6-f complex are cytochrome b6, subunit IV (17 kDa polypeptide, PetD), cytochrome f and the Rieske protein, while the 4 small subunits are PetG, PetL, PetM and PetN. The complex functions as a dimer.

It localises to the cellular thylakoid membrane. Its function is as follows. Component of the cytochrome b6-f complex, which mediates electron transfer between photosystem II (PSII) and photosystem I (PSI), cyclic electron flow around PSI, and state transitions. PetL is important for photoautotrophic growth as well as for electron transfer efficiency and stability of the cytochrome b6-f complex. This chain is Cytochrome b6-f complex subunit 6, found in Nostoc sp. (strain PCC 7120 / SAG 25.82 / UTEX 2576).